The following is a 346-amino-acid chain: GTPase Obg (346 aa).

Residues 1 to 159 (MRFVDRCRLK…RELRLELKVL (159 aa)) form the Obg domain. The segment at 122-147 (KGGRGNLHFKSPHDRAPRRAEPGEPG) is disordered. Positions 132–147 (SPHDRAPRRAEPGEPG) are enriched in basic and acidic residues. The OBG-type G domain maps to 160-336 (ADVGLLGFPN…LVRELAALAR (177 aa)). GTP is bound by residues 166-173 (GFPNAGKS), 191-195 (FTTLT), 218-221 (DIPG), 288-291 (TKAD), and 317-319 (SAA). 2 residues coordinate Mg(2+): Ser173 and Thr193.

The protein belongs to the TRAFAC class OBG-HflX-like GTPase superfamily. OBG GTPase family. Monomer. It depends on Mg(2+) as a cofactor.

It localises to the cytoplasm. Its function is as follows. An essential GTPase which binds GTP, GDP and possibly (p)ppGpp with moderate affinity, with high nucleotide exchange rates and a fairly low GTP hydrolysis rate. Plays a role in control of the cell cycle, stress response, ribosome biogenesis and in those bacteria that undergo differentiation, in morphogenesis control. This is GTPase Obg from Sorangium cellulosum (strain So ce56) (Polyangium cellulosum (strain So ce56)).